Reading from the N-terminus, the 37-residue chain is Potassium channel toxin alpha-KTx 1.4 (37 aa).

3 disulfide bridges follow: Cys7–Cys28, Cys13–Cys33, and Cys17–Cys35.

Belongs to the short scorpion toxin superfamily. Potassium channel inhibitor family. Alpha-KTx 01 subfamily. Expressed by the venom gland.

It localises to the secreted. Its function is as follows. Blocks selectively the high conductance calcium-activated (maxi-K) potassium channels. This chain is Potassium channel toxin alpha-KTx 1.4, found in Centruroides limbatus (Bark scorpion).